A 322-amino-acid chain; its full sequence is Phosphatidylserine decarboxylase proenzyme (322 aa).

Residues D90, H147, and S254 each act as charge relay system; for autoendoproteolytic cleavage activity in the active site. S254 (schiff-base intermediate with substrate; via pyruvic acid; for decarboxylase activity) is an active-site residue. S254 is subject to Pyruvic acid (Ser); by autocatalysis. Residues 292–322 (TPDAEPSPLPAEEIEAEHDASPLVDDKKDQV) form a disordered region. Over residues 308–322 (EHDASPLVDDKKDQV) the composition is skewed to basic and acidic residues.

It belongs to the phosphatidylserine decarboxylase family. PSD-B subfamily. Prokaryotic type I sub-subfamily. In terms of assembly, heterodimer of a large membrane-associated beta subunit and a small pyruvoyl-containing alpha subunit. It depends on pyruvate as a cofactor. In terms of processing, is synthesized initially as an inactive proenzyme. Formation of the active enzyme involves a self-maturation process in which the active site pyruvoyl group is generated from an internal serine residue via an autocatalytic post-translational modification. Two non-identical subunits are generated from the proenzyme in this reaction, and the pyruvate is formed at the N-terminus of the alpha chain, which is derived from the carboxyl end of the proenzyme. The autoendoproteolytic cleavage occurs by a canonical serine protease mechanism, in which the side chain hydroxyl group of the serine supplies its oxygen atom to form the C-terminus of the beta chain, while the remainder of the serine residue undergoes an oxidative deamination to produce ammonia and the pyruvoyl prosthetic group on the alpha chain. During this reaction, the Ser that is part of the protease active site of the proenzyme becomes the pyruvoyl prosthetic group, which constitutes an essential element of the active site of the mature decarboxylase.

The protein resides in the cell membrane. It carries out the reaction a 1,2-diacyl-sn-glycero-3-phospho-L-serine + H(+) = a 1,2-diacyl-sn-glycero-3-phosphoethanolamine + CO2. It functions in the pathway phospholipid metabolism; phosphatidylethanolamine biosynthesis; phosphatidylethanolamine from CDP-diacylglycerol: step 2/2. Functionally, catalyzes the formation of phosphatidylethanolamine (PtdEtn) from phosphatidylserine (PtdSer). The polypeptide is Phosphatidylserine decarboxylase proenzyme (Escherichia coli O7:K1 (strain IAI39 / ExPEC)).